A 463-amino-acid chain; its full sequence is Lipase 6 (463 aa).

The signal sequence occupies residues 1-16 (MRDLILFLSLLHTIFA). An intrachain disulfide couples C112 to C285. The active-site Charge relay system is the S196. N-linked (GlcNAc...) asparagine glycosylation is present at N231. Catalysis depends on charge relay system residues D348 and H381. The cysteines at positions 364 and 409 are disulfide-linked. The N-linked (GlcNAc...) asparagine glycan is linked to N422.

The protein belongs to the AB hydrolase superfamily. Lipase family. Class Lip subfamily.

It is found in the secreted. The catalysed reaction is a triacylglycerol + H2O = a diacylglycerol + a fatty acid + H(+). Functionally, secreted lipase that is able to hydrolyze both the neutral triacylglycerols and the monopalmitate ester Tween 40, allowing the use of hydrolyzed products as carbon sources. Has broad lipolytic activity, which may be important for colonization and subsequent infection, therefore contributing to the persistence and virulence in human tissue. The sequence is that of Lipase 6 from Candida albicans (strain SC5314 / ATCC MYA-2876) (Yeast).